We begin with the raw amino-acid sequence, 217 residues long: Monomethylamine corrinoid protein 2 (217 aa).

The B12-binding N-terminal domain occupies 1-91; the sequence is MTNTEIFDKL…ELEKNKKEGD (91 aa). The region spanning 93-217 is the B12-binding domain; it reads AGLAITFVAE…AAKVALEVMK (125 aa). His-106 contacts methylcob(III)alamin.

Belongs to the methylamine corrinoid protein family. In terms of assembly, can form a complex with MtmB.

Its pathway is one-carbon metabolism; methanogenesis from methylamine. Acts as a methyl group carrier between MtmB and MtbA. This Methanosarcina barkeri protein is Monomethylamine corrinoid protein 2 (mtmC2).